The primary structure comprises 1202 residues: Putative late blight resistance protein homolog R1B-8 (1202 aa).

2 coiled-coil regions span residues 345–368 (RYSD…ESLQ) and 437–459 (LRMN…RLLN). Positions 426–741 (IARTSSQLAR…ISESFIKSCE (316 aa)) constitute an NB-ARC domain. 471 to 478 (GMPGLGKT) contributes to the ATP binding site. LRR repeat units follow at residues 865–889 (FKFL…LFYL), 908–936 (LWNL…VWDM), 1011–1036 (PIRL…ISAP), 1040–1059 (YLKL…TADH), 1060–1084 (LKHL…VSNG), 1086–1111 (FPQL…VFPN), and 1128–1151 (SCFM…VVQS).

Belongs to the disease resistance NB-LRR family.

It localises to the cytoplasm. It is found in the membrane. Functionally, confers resistance to late blight (Phytophthora infestans) races carrying the avirulence gene Avr1. Resistance proteins guard the plant against pathogens that contain an appropriate avirulence protein via an indirect interaction with this avirulence protein. That triggers a defense system including the hypersensitive response, which restricts the pathogen growth. This chain is Putative late blight resistance protein homolog R1B-8 (R1B-8), found in Solanum demissum (Wild potato).